Reading from the N-terminus, the 196-residue chain is Protein/nucleic acid deglycase 3 (196 aa).

The active-site Nucleophile is the Cys106. Cys106 bears the Cysteine sulfinic acid (-SO2H); alternate mark.

Belongs to the peptidase C56 family. As to quaternary structure, homodimer. In terms of processing, cys-106 is easily oxidized to sulfinic acid.

It catalyses the reaction N(omega)-(1-hydroxy-2-oxopropyl)-L-arginyl-[protein] + H2O = lactate + L-arginyl-[protein] + H(+). The enzyme catalyses N(6)-(1-hydroxy-2-oxopropyl)-L-lysyl-[protein] + H2O = lactate + L-lysyl-[protein] + H(+). It carries out the reaction S-(1-hydroxy-2-oxopropyl)-L-cysteinyl-[protein] + H2O = lactate + L-cysteinyl-[protein] + H(+). The catalysed reaction is N(omega)-(1-hydroxy-2-oxoethyl)-L-arginyl-[protein] + H2O = L-arginyl-[protein] + glycolate + H(+). It catalyses the reaction N(6)-(1-hydroxy-2-oxoethyl)-L-lysyl-[protein] + H2O = glycolate + L-lysyl-[protein] + H(+). The enzyme catalyses S-(1-hydroxy-2-oxoethyl)-L-cysteinyl-[protein] + H2O = glycolate + L-cysteinyl-[protein] + H(+). It carries out the reaction N(2)-(1-hydroxy-2-oxopropyl)-dGTP + H2O = lactate + dGTP + H(+). The catalysed reaction is N(2)-(1-hydroxy-2-oxopropyl)-GTP + H2O = lactate + GTP + H(+). It catalyses the reaction N(2)-(1-hydroxy-2-oxopropyl)-GDP + H2O = lactate + GDP + H(+). The enzyme catalyses N(2)-(1-hydroxy-2-oxopropyl)-GMP + H2O = lactate + GMP + H(+). It carries out the reaction N(2)-(1-hydroxy-2-oxoethyl)-dGTP + H2O = dGTP + glycolate + H(+). The catalysed reaction is N(2)-(1-hydroxy-2-oxoethyl)-GTP + H2O = glycolate + GTP + H(+). It catalyses the reaction N(2)-(1-hydroxy-2-oxoethyl)-GDP + H2O = glycolate + GDP + H(+). The enzyme catalyses N(2)-(1-hydroxy-2-oxoethyl)-GMP + H2O = glycolate + GMP + H(+). It carries out the reaction an N(2)-(1-hydroxy-2-oxopropyl)-guanosine in RNA + H2O = a guanosine in RNA + lactate + H(+). The catalysed reaction is an N(2)-(1-hydroxy-2-oxopropyl)-2'-deoxyguanosine in DNA + H2O = a 2'-deoxyguanosine in DNA + lactate + H(+). It catalyses the reaction an N(2)-(1-hydroxy-2-oxoethyl)-guanosine in RNA + H2O = a guanosine in RNA + glycolate + H(+). The enzyme catalyses an N(2)-(1-hydroxy-2-oxoethyl)-2'-deoxyguanosine in DNA + H2O = a 2'-deoxyguanosine in DNA + glycolate + H(+). Its activity is regulated as follows. Glyoxalase activity is inhibited by zinc ions. Active as a chaperone in both its reduced and oxidized states, and is more active in its oxidized form. Protein and nucleotide deglycase that catalyzes the deglycation of the Maillard adducts formed between amino groups of proteins or nucleotides and reactive carbonyl groups of glyoxals. Thus, functions as a protein deglycase that repairs methylglyoxal- and glyoxal-glycated proteins, and releases repaired proteins and lactate or glycolate, respectively. Deglycates cysteine, arginine and lysine residues in proteins, and thus reactivates these proteins by reversing glycation by glyoxals. Is able to repair glycated serum albumin, collagen, glyceraldehyde-3-phosphate dehydrogenase, and fructose biphosphate aldolase. Acts on early glycation intermediates (hemithioacetals and aminocarbinols), preventing the formation of Schiff bases and advanced glycation endproducts (AGE) that cause irreversible damage. Also functions as a nucleotide deglycase able to repair glycated guanine in the free nucleotide pool (GTP, GDP, GMP, dGTP) and in DNA and RNA. Is thus involved in a major nucleotide repair system named guanine glycation repair (GG repair), dedicated to reversing methylglyoxal and glyoxal damage via nucleotide sanitization and direct nucleic acid repair. However, is less efficient than Hsp31 and YhbO, suggesting that YajL might be preferentially dedicated to protein repair. Displays a covalent chaperone activity with sulfenylated thiol proteins by forming mixed disulfides with members of the thiol proteome, and preferentially with sulfenylated cellular proteins, upon oxidative stress; these mixed disulfides can be subsequently reduced by low-molecular-weight thiols to regenerate YajL and reduced proteins. Involved in biogenesis of ribosomal proteins, probably as a ribosomal protein-folding chaperone. Confers resistance to oxidative stress. Plays an important role in protection against electrophile/carbonyl stress. The chaperone activity reported for YajL is probably recruited to execute its deglycase activity, to interact with non-native glycated proteins and gain access to partially buried glycated sites. Also displays an apparent glyoxalase activity that in fact reflects its deglycase activity. This Escherichia coli (strain K12) protein is Protein/nucleic acid deglycase 3 (yajL).